A 130-amino-acid chain; its full sequence is MAKPTKKTGSKKTKRNVPNGVAHIQSTFNNTIVSITDTAGEVIAWSSAGASGFKGARKGTPFAAQTAAEAAARRALEQGMRQIEVLVRGPGSGRETAIRALQVAGLEITLIRDVTPLPHNGCRRPKRRRV.

It belongs to the universal ribosomal protein uS11 family. As to quaternary structure, part of the 30S ribosomal subunit. Interacts with proteins S7 and S18. Binds to IF-3.

In terms of biological role, located on the platform of the 30S subunit, it bridges several disparate RNA helices of the 16S rRNA. Forms part of the Shine-Dalgarno cleft in the 70S ribosome. The sequence is that of Small ribosomal subunit protein uS11 from Prochlorococcus marinus (strain MIT 9303).